A 547-amino-acid chain; its full sequence is Chaperonin GroEL (547 aa).

Residues 30 to 33 (TLGP), K51, 87 to 91 (DGTTT), G415, 479 to 481 (NAA), and D495 each bind ATP. Residues 525–547 (PKEDSPGAGAGMGGMGGMGGMDM) are disordered. The segment covering 532 to 547 (AGAGMGGMGGMGGMDM) has biased composition (gly residues).

It belongs to the chaperonin (HSP60) family. Forms a cylinder of 14 subunits composed of two heptameric rings stacked back-to-back. Interacts with the co-chaperonin GroES.

Its subcellular location is the cytoplasm. The enzyme catalyses ATP + H2O + a folded polypeptide = ADP + phosphate + an unfolded polypeptide.. Its function is as follows. Together with its co-chaperonin GroES, plays an essential role in assisting protein folding. The GroEL-GroES system forms a nano-cage that allows encapsulation of the non-native substrate proteins and provides a physical environment optimized to promote and accelerate protein folding. This is Chaperonin GroEL from Nitrosomonas europaea (strain ATCC 19718 / CIP 103999 / KCTC 2705 / NBRC 14298).